We begin with the raw amino-acid sequence, 146 residues long: Large ribosomal subunit protein uL15 (146 aa).

The interval 1–61 is disordered; the sequence is MELNSLKPAA…GGQMPMHRRL (61 aa). Positions 30–39 are enriched in basic residues; that stretch reads TATKGHKGQK.

It belongs to the universal ribosomal protein uL15 family. Part of the 50S ribosomal subunit.

In terms of biological role, binds to the 23S rRNA. This chain is Large ribosomal subunit protein uL15, found in Geotalea uraniireducens (strain Rf4) (Geobacter uraniireducens).